Here is a 211-residue protein sequence, read N- to C-terminus: Arginine exporter protein ArgO (211 aa).

6 helical membrane passes run 1–21 (MISY…PLGP), 37–57 (LMIA…GIFG), 68–88 (LLAL…FGAL), 111–131 (IIAT…DTFV), 147–167 (WFAL…ALLA), and 179–199 (AQRI…FQLA).

Belongs to the LysE/ArgO transporter (TC 2.A.75) family.

It localises to the cell inner membrane. It carries out the reaction L-arginine(in) = L-arginine(out). In terms of biological role, involved in the export of arginine. Important to control the intracellular level of arginine and the correct balance between arginine and lysine. This Salmonella schwarzengrund (strain CVM19633) protein is Arginine exporter protein ArgO.